The following is a 509-amino-acid chain: Sensor histidine kinase TrcS (509 aa).

Helical transmembrane passes span 24-44 and 188-208; these read LLLG…VVSV and VALV…VVGY. Residues 207–269 enclose the HAMP domain; the sequence is GYALRPLRRV…LLDNVDGALA (63 aa). Residues 284-502 enclose the Histidine kinase domain; it reads DASHELRTPL…VFRVRLPMIE (219 aa). His-287 bears the Phosphohistidine; by autocatalysis mark.

A divalent metal cation serves as cofactor. In terms of processing, autophosphorylated.

The protein localises to the cell membrane. It catalyses the reaction ATP + protein L-histidine = ADP + protein N-phospho-L-histidine.. Member of the two-component regulatory system TrcS/TrcR. Phosphorylates TrcR. The TrcR-TrcS regulatory system may act as a transition regulatory system involved in adapting to an intracellular environment and transitioning from latency to reactivation. The protein is Sensor histidine kinase TrcS of Mycobacterium tuberculosis (strain ATCC 25618 / H37Rv).